Consider the following 1094-residue polypeptide: Probable serine/threonine-protein kinase kinX (1094 aa).

The 260-residue stretch at 22-281 (LDFISEIGSG…QTLKQIKTTL (260 aa)) folds into the Protein kinase domain. Residues 28-36 (IGSGGFGKV) and Lys-49 each bind ATP. Asp-146 serves as the catalytic Proton acceptor. Disordered stretches follow at residues 301 to 884 (TTNG…SVED) and 946 to 1083 (IKVE…PNNK). Over residues 330–344 (YDDDDDDDDDDDDND) the composition is skewed to acidic residues. Residues 351–373 (SDNSNSNVTLESNSNYNSSTING) show a composition bias toward polar residues. Residues 374–387 (QEQQEQQEQQQQQQ) show a composition bias toward low complexity. Acidic residues predominate over residues 393–408 (DEGEIEQDDDNIEVYD). Positions 410-424 (DYQKKLEEHQKELLE) are enriched in basic and acidic residues. Composition is skewed to acidic residues over residues 433–454 (STDENEVYEQEEEEEEEDEEEQ), 480–496 (DDEDDDDDEEDEEEGDE), and 503–523 (DFDEDDEDDEEYDEDEDDEDE). Low complexity-rich tracts occupy residues 526–542 (IQYYQQQLQYQQQLQKQ) and 564–585 (RQLQQQQQQQQQQQQQQQQHQQ). Over residues 587–602 (YDDDDDDDDEEEEEYD) the composition is skewed to acidic residues. A compositionally biased stretch (basic and acidic residues) spans 603–639 (DVIRHDTDSEEESKDKTPLPWDQHFEKQKESENKVEQ). The segment covering 650 to 661 (QETEQQQQQQQQ) has biased composition (low complexity). Over residues 670–801 (PTKVEDVKVE…EPVEEVKVEE (132 aa)) the composition is skewed to basic and acidic residues. A 40 X 9 AA approximate repeats of V-K-V-E-E-P-V-E-E region spans residues 676 to 978 (VKVETEEQTK…PVKVEVASPV (303 aa)). A compositionally biased stretch (acidic residues) spans 802 to 816 (PVEEVEAEESVQEPV). 2 stretches are compositionally biased toward basic and acidic residues: residues 817–884 (EEVK…SVED) and 946–971 (IKVEEPIKVEEPIKVEEPIKVEEPVK). Composition is skewed to low complexity over residues 972–985 (VEVASPVVQEQPPQ) and 992–1011 (VVSTSTITIASSPQQSSNSP). Residues 1016–1031 (VKQPQQQEIEVNSTPI) show a composition bias toward polar residues. Positions 1032 to 1050 (KQQQQQQQTPTQQTQTPTK) are enriched in low complexity.

The protein belongs to the protein kinase superfamily. TKL Ser/Thr protein kinase family.

The catalysed reaction is L-seryl-[protein] + ATP = O-phospho-L-seryl-[protein] + ADP + H(+). It catalyses the reaction L-threonyl-[protein] + ATP = O-phospho-L-threonyl-[protein] + ADP + H(+). This chain is Probable serine/threonine-protein kinase kinX (kinX), found in Dictyostelium discoideum (Social amoeba).